The sequence spans 701 residues: Elongation factor G (701 aa).

The tr-type G domain maps to 6-286 (KFTRNIGIAA…YVMELLPSPL (281 aa)). Residues 15–22 (AHIDAGKT), 83–87 (DTPGH), and 137–140 (NKMD) each bind GTP.

It belongs to the TRAFAC class translation factor GTPase superfamily. Classic translation factor GTPase family. EF-G/EF-2 subfamily.

It localises to the cytoplasm. In terms of biological role, catalyzes the GTP-dependent ribosomal translocation step during translation elongation. During this step, the ribosome changes from the pre-translocational (PRE) to the post-translocational (POST) state as the newly formed A-site-bound peptidyl-tRNA and P-site-bound deacylated tRNA move to the P and E sites, respectively. Catalyzes the coordinated movement of the two tRNA molecules, the mRNA and conformational changes in the ribosome. The protein is Elongation factor G of Cytophaga hutchinsonii (strain ATCC 33406 / DSM 1761 / CIP 103989 / NBRC 15051 / NCIMB 9469 / D465).